The chain runs to 121 residues: Large ribosomal subunit protein uL3 (121 aa).

Gln-62 is subject to N5-methylglutamine.

The protein belongs to the universal ribosomal protein uL3 family. In terms of assembly, part of the 50S ribosomal subunit. Forms a cluster with proteins L14 and L19. Post-translationally, methylated by PrmB.

Its function is as follows. One of the primary rRNA binding proteins, it binds directly near the 3'-end of the 23S rRNA, where it nucleates assembly of the 50S subunit. The chain is Large ribosomal subunit protein uL3 (rplC) from Aggregatibacter actinomycetemcomitans (Actinobacillus actinomycetemcomitans).